The following is a 160-amino-acid chain: Serine-protein kinase RsbW (160 aa).

This sequence belongs to the anti-sigma-factor family.

It catalyses the reaction L-seryl-[protein] + ATP = O-phospho-L-seryl-[protein] + ADP + H(+). The enzyme catalyses L-threonyl-[protein] + ATP = O-phospho-L-threonyl-[protein] + ADP + H(+). Functionally, negative regulator of sigma-B activity. Phosphorylates and inactivates its specific antagonist protein, RsbV. Upon phosphorylation of RsbV, RsbW is released and binds to sigma-B, thereby blocking its ability to form an RNA polymerase holoenzyme (E-sigma-B). The sequence is that of Serine-protein kinase RsbW from Bacillus cereus (strain G9842).